Here is a 363-residue protein sequence, read N- to C-terminus: GDSL esterase/lipase At3g14220 (363 aa).

The N-terminal stretch at 1 to 28 is a signal peptide; sequence MAKNRNLVFFLGVLASFTLSSFPVTVSG. The active-site Nucleophile is S39. Catalysis depends on residues D318 and H321.

Belongs to the 'GDSL' lipolytic enzyme family.

It localises to the secreted. This chain is GDSL esterase/lipase At3g14220, found in Arabidopsis thaliana (Mouse-ear cress).